The primary structure comprises 641 residues: Mannosyl-oligosaccharide 1,2-alpha-mannosidase IB (641 aa).

T2 bears the N-acetylthreonine mark. Topologically, residues 2-36 (TTPALLPLSGRRIPPLNLGPPSFPHHRATLRLSEK) are cytoplasmic. The chain crosses the membrane as a helical; Signal-anchor for type II membrane protein span at residues 37 to 57 (FILLLILSAFITLCFGAFFFL). Topologically, residues 58 to 641 (PDSSKHKRFD…STLSGNPAVR (584 aa)) are lumenal. Cysteines 462 and 494 form a disulfide. The active-site Proton donor is the E508. Position 619 (T619) interacts with Ca(2+). N631 carries N-linked (GlcNAc...) asparagine glycosylation.

Belongs to the glycosyl hydrolase 47 family. Requires Ca(2+) as cofactor.

It is found in the golgi apparatus membrane. It carries out the reaction N(4)-(alpha-D-Man-(1-&gt;2)-alpha-D-Man-(1-&gt;2)-alpha-D-Man-(1-&gt;3)-[alpha-D-Man-(1-&gt;2)-alpha-D-Man-(1-&gt;3)-[alpha-D-Man-(1-&gt;2)-alpha-D-Man-(1-&gt;6)]-alpha-D-Man-(1-&gt;6)]-beta-D-Man-(1-&gt;4)-beta-D-GlcNAc-(1-&gt;4)-beta-D-GlcNAc)-L-asparaginyl-[protein] (N-glucan mannose isomer 9A1,2,3B1,2,3) + 4 H2O = N(4)-(alpha-D-Man-(1-&gt;3)-[alpha-D-Man-(1-&gt;3)-[alpha-D-Man-(1-&gt;6)]-alpha-D-Man-(1-&gt;6)]-beta-D-Man-(1-&gt;4)-beta-D-GlcNAc-(1-&gt;4)-beta-D-GlcNAc)-L-asparaginyl-[protein] (N-glucan mannose isomer 5A1,2) + 4 beta-D-mannose. The enzyme catalyses N(4)-(alpha-D-Man-(1-&gt;2)-alpha-D-Man-(1-&gt;2)-alpha-D-Man-(1-&gt;3)-[alpha-D-Man-(1-&gt;3)-[alpha-D-Man-(1-&gt;2)-alpha-D-Man-(1-&gt;6)]-alpha-D-Man-(1-&gt;6)]-beta-D-Man-(1-&gt;4)-beta-D-GlcNAc-(1-&gt;4)-beta-D-GlcNAc)-L-asparaginyl-[protein] (N-glucan mannose isomer 8A1,2,3B1,3) + 3 H2O = N(4)-(alpha-D-Man-(1-&gt;3)-[alpha-D-Man-(1-&gt;3)-[alpha-D-Man-(1-&gt;6)]-alpha-D-Man-(1-&gt;6)]-beta-D-Man-(1-&gt;4)-beta-D-GlcNAc-(1-&gt;4)-beta-D-GlcNAc)-L-asparaginyl-[protein] (N-glucan mannose isomer 5A1,2) + 3 beta-D-mannose. It participates in protein modification; protein glycosylation. Its activity is regulated as follows. Inhibited by both 1-deoxymannojirimycin and kifunensine. Involved in the maturation of Asn-linked oligosaccharides. Progressively trim alpha-1,2-linked mannose residues from Man(9)GlcNAc(2) to produce Man(5)GlcNAc(2). The protein is Mannosyl-oligosaccharide 1,2-alpha-mannosidase IB (Man1a2) of Mus musculus (Mouse).